Reading from the N-terminus, the 400-residue chain is Enoyl-[acyl-carrier-protein] reductase [NADH] (400 aa).

NAD(+) is bound by residues 48–53 (GSSSGY), 74–75 (FE), 111–112 (DA), and 139–140 (LA). Residue Tyr225 coordinates substrate. The active-site Proton donor is Tyr235. NAD(+)-binding positions include Lys244 and 273 to 275 (VVT).

This sequence belongs to the TER reductase family. Monomer.

The catalysed reaction is a 2,3-saturated acyl-[ACP] + NAD(+) = a (2E)-enoyl-[ACP] + NADH + H(+). Its pathway is lipid metabolism; fatty acid biosynthesis. Its function is as follows. Involved in the final reduction of the elongation cycle of fatty acid synthesis (FAS II). Catalyzes the reduction of a carbon-carbon double bond in an enoyl moiety that is covalently linked to an acyl carrier protein (ACP). In Shewanella woodyi (strain ATCC 51908 / MS32), this protein is Enoyl-[acyl-carrier-protein] reductase [NADH].